The primary structure comprises 269 residues: Aquaporin-7 (269 aa).

Residues 1–20 (MAGSVLENIQSVLQKTWVRE) are Cytoplasmic-facing. S4 is modified (phosphoserine). Residues 21 to 38 (FLAEFLSTYVLMVFGLGS) traverse the membrane as a helical segment. Residues 39-51 (VAHMVLGERLGSY) are Extracellular-facing. Residues 52-69 (LGVNLGFGFGVTMGIHVA) form a helical membrane-spanning segment. Topologically, residues 70-73 (GGIS) are cytoplasmic. Positions 74–87 (GAHMNAAVTFTNCA) form an intramembrane region, discontinuously helical. Residues 78–80 (NAA) carry the NPA 1 motif. At 88 to 95 (LGRMAWKK) the chain is on the cytoplasmic side. The chain crosses the membrane as a helical span at residues 96 to 116 (FPIYVLGQFLGSFLAAATTYL). Topologically, residues 117–151 (IFYGAINHYAGGELLVTGPKSTANIFATYLPEHMT) are extracellular. The chain crosses the membrane as a helical span at residues 152-172 (LWRGFVDEVFVTGMLQLCIFA). The Cytoplasmic segment spans residues 173 to 184 (ITDKLNSPALQG). The helical transmembrane segment at 185–201 (TEPLMIGILVCVLGVSL) threads the bilayer. The Extracellular segment spans residues 202–205 (GMNT). The discontinuously helical intramembrane region spans 206–219 (GYAINPSRDLPPRF). Positions 210–212 (NPS) match the NPA 2 motif. Residues 220–237 (FTFIAGWGKKVFSAGNNW) lie on the Extracellular side of the membrane. The helical transmembrane segment at 238 to 259 (WWVPVVAPLLGAYLGGIVYLGL) threads the bilayer. Topologically, residues 260–269 (IHAGIPPQGS) are cytoplasmic.

Belongs to the MIP/aquaporin (TC 1.A.8) family. Homotetramer; each monomer provides an independent glycerol/water pore. Two homotetramers on opposing membranes can dimerize, forming a cell-cell junction. Interacts with PLIN1. In terms of processing, phosphorylation by PKA could prevent the interaction with PLIN1. In terms of tissue distribution, detected in heart, kidney and testis.

The protein resides in the cell membrane. It is found in the cytoplasmic vesicle membrane. Its subcellular location is the lipid droplet. It catalyses the reaction glycerol(in) = glycerol(out). The enzyme catalyses H2O(in) = H2O(out). The catalysed reaction is urea(in) = urea(out). With respect to regulation, glycerol transport is regulated by pH, with the porin being permeable to glycerol at pH 7.4 but not at pH 5.5. Water permeability, however, is not influenced by pH. Not inhibited by mercury ions. In terms of biological role, aquaglyceroporins form homotetrameric transmembrane channels, with each monomer independently mediating glycerol and water transport across the plasma membrane along their osmotic gradient. Could also be permeable to urea. Mediates the efflux of glycerol, formed upon triglyceride hydrolysis, to avoid its accumulation in adipocytes and to make it available to other tissues. In the kidney, mediates the reabsorption of glycerol, preventing its loss in urine, again participating to energy homeostasis. In pancreatic beta cells, it also mediates the efflux of glycerol, regulating its intracellular levels. The protein is Aquaporin-7 of Rattus norvegicus (Rat).